We begin with the raw amino-acid sequence, 324 residues long: Glyoxylate/hydroxypyruvate reductase B (324 aa).

Active-site residues include Arg237 and Glu266. His285 (proton donor) is an active-site residue.

It belongs to the D-isomer specific 2-hydroxyacid dehydrogenase family. GhrB subfamily. As to quaternary structure, homodimer.

The protein resides in the cytoplasm. The enzyme catalyses glycolate + NADP(+) = glyoxylate + NADPH + H(+). It catalyses the reaction (R)-glycerate + NAD(+) = 3-hydroxypyruvate + NADH + H(+). The catalysed reaction is (R)-glycerate + NADP(+) = 3-hydroxypyruvate + NADPH + H(+). Functionally, catalyzes the NADPH-dependent reduction of glyoxylate and hydroxypyruvate into glycolate and glycerate, respectively. The chain is Glyoxylate/hydroxypyruvate reductase B from Escherichia coli O6:H1 (strain CFT073 / ATCC 700928 / UPEC).